The chain runs to 601 residues: uncharacterized protein (601 aa).

A signal peptide spans 1–24 (MKLSSLPSGLGLASLLGLISSATA).

It localises to the membrane. This is an uncharacterized protein from Schizosaccharomyces pombe (strain 972 / ATCC 24843) (Fission yeast).